The primary structure comprises 313 residues: Olfactory receptor 4E2 (313 aa).

At 1–25 the chain is on the extracellular side; the sequence is MDSLNQTRVTEFVFLGLTDNRVLEM. An N-linked (GlcNAc...) asparagine glycan is attached at Asn5. Residues 26 to 49 form a helical membrane-spanning segment; sequence LFFMAFSAIYMLTLSGNILIIIAT. At 50-57 the chain is on the cytoplasmic side; that stretch reads VFTPSLHT. A helical membrane pass occupies residues 58–79; that stretch reads PMYFFLSNLSFIDICHSSVTVP. The Extracellular portion of the chain corresponds to 80–100; it reads KMLEGLLLERKTISFDNCITQ. A disulfide bridge connects residues Cys97 and Cys179. Residues 101–120 form a helical membrane-spanning segment; the sequence is LFFLHLFACAEIFLLIIVAY. Cu cation is bound by residues His105 and Cys109. At 121–139 the chain is on the cytoplasmic side; that stretch reads DRYVAICTPLHYPNVMNMR. A helical transmembrane segment spans residues 140–158; that stretch reads VCIQLVFALWLGGTVHSLG. Residues 159–195 are Extracellular-facing; it reads QTFLTIRLPYCGPNIIDSYFCDVPLVIKLACTDTYLT. The chain crosses the membrane as a helical span at residues 196-219; the sequence is GILIVTNSGTISLSCFLAVVTSYM. Residues 220 to 235 lie on the Cytoplasmic side of the membrane; it reads VILVSLRKHSAEGRQK. A helical membrane pass occupies residues 236 to 258; it reads ALSTCSAHFMVVALFFGPCIFIY. At 259-269 the chain is on the extracellular side; sequence TRPDTSFSIDK. Arg260 contributes to the Cu cation binding site. The helical transmembrane segment at 270-289 threads the bilayer; that stretch reads VVSVFYTVVTPLLNPFIYTL. At 290 to 313 the chain is on the cytoplasmic side; sequence RNEEVKSAMKQLRQRQVFFTKSYT.

This sequence belongs to the G-protein coupled receptor 1 family.

It localises to the cell membrane. Its activity is regulated as follows. Copper binding enhances receptor activity in response to odorant binding. In terms of biological role, olfactory receptor that is activated by the binding of organosulfur odorants with thioether groups such as (methylthio)methanethiol (MTMT) and bis(methylthiomethyl) disulfide. Also binds odorants cis-cyclooctene and tert-butyl mercaptan. The activity of this receptor is mediated by G proteins which activate adenylyl cyclase. The sequence is that of Olfactory receptor 4E2 from Homo sapiens (Human).